The following is a 546-amino-acid chain: CTP synthase (546 aa).

Residues 1–266 are amidoligase domain; the sequence is MAKYYIFITG…DSYVCDRFCI (266 aa). Ser-14 serves as a coordination point for CTP. Position 14 (Ser-14) interacts with UTP. ATP-binding positions include 15–20 and Asp-72; that span reads SLGKGI. Residues Asp-72 and Glu-140 each coordinate Mg(2+). CTP-binding positions include 147–149, 187–192, and Lys-223; these read DIE and KTKPTQ. UTP is bound by residues 187 to 192 and Lys-223; that span reads KTKPTQ. The region spanning 291–544 is the Glutamine amidotransferase type-1 domain; it reads NIGIIGKYTE…VKAAFDFKNK (254 aa). Residue Gly-352 participates in L-glutamine binding. Catalysis depends on Cys-379, which acts as the Nucleophile; for glutamine hydrolysis. L-glutamine-binding positions include 380 to 383, Glu-403, and Arg-470; that span reads LGMQ. Active-site residues include His-517 and Glu-519.

Belongs to the CTP synthase family. In terms of assembly, homotetramer.

It carries out the reaction UTP + L-glutamine + ATP + H2O = CTP + L-glutamate + ADP + phosphate + 2 H(+). The catalysed reaction is L-glutamine + H2O = L-glutamate + NH4(+). The enzyme catalyses UTP + NH4(+) + ATP = CTP + ADP + phosphate + 2 H(+). It participates in pyrimidine metabolism; CTP biosynthesis via de novo pathway; CTP from UDP: step 2/2. With respect to regulation, allosterically activated by GTP, when glutamine is the substrate; GTP has no effect on the reaction when ammonia is the substrate. The allosteric effector GTP functions by stabilizing the protein conformation that binds the tetrahedral intermediate(s) formed during glutamine hydrolysis. Inhibited by the product CTP, via allosteric rather than competitive inhibition. In terms of biological role, catalyzes the ATP-dependent amination of UTP to CTP with either L-glutamine or ammonia as the source of nitrogen. Regulates intracellular CTP levels through interactions with the four ribonucleotide triphosphates. The polypeptide is CTP synthase (Wigglesworthia glossinidia brevipalpis).